Here is a 319-residue protein sequence, read N- to C-terminus: 1-aminocyclopropane-1-carboxylate oxidase (319 aa).

Residues 153–253 (PTFGTKVSNY…RMSIASFYNP (101 aa)) form the Fe2OG dioxygenase domain. Histidine 177, aspartate 179, and histidine 234 together coordinate Fe cation.

This sequence belongs to the iron/ascorbate-dependent oxidoreductase family. The cofactor is Fe cation.

The enzyme catalyses 1-aminocyclopropane-1-carboxylate + L-ascorbate + O2 = ethene + L-dehydroascorbate + hydrogen cyanide + CO2 + 2 H2O. It participates in alkene biosynthesis; ethylene biosynthesis via S-adenosyl-L-methionine; ethylene from S-adenosyl-L-methionine: step 2/2. The protein is 1-aminocyclopropane-1-carboxylate oxidase (ACO1) of Prunus mume (Japanese apricot).